The sequence spans 467 residues: 3-isopropylmalate dehydratase large subunit (467 aa).

Residues cysteine 349, cysteine 408, and cysteine 411 each coordinate [4Fe-4S] cluster.

This sequence belongs to the aconitase/IPM isomerase family. LeuC type 1 subfamily. Heterodimer of LeuC and LeuD. The cofactor is [4Fe-4S] cluster.

It catalyses the reaction (2R,3S)-3-isopropylmalate = (2S)-2-isopropylmalate. The protein operates within amino-acid biosynthesis; L-leucine biosynthesis; L-leucine from 3-methyl-2-oxobutanoate: step 2/4. In terms of biological role, catalyzes the isomerization between 2-isopropylmalate and 3-isopropylmalate, via the formation of 2-isopropylmaleate. The chain is 3-isopropylmalate dehydratase large subunit from Dinoroseobacter shibae (strain DSM 16493 / NCIMB 14021 / DFL 12).